Consider the following 424-residue polypeptide: UPF0597 protein Sputw3181_2955 (424 aa).

It belongs to the UPF0597 family.

The chain is UPF0597 protein Sputw3181_2955 from Shewanella sp. (strain W3-18-1).